A 373-amino-acid chain; its full sequence is NAD(P)H-quinone oxidoreductase subunit 1 (373 aa).

Transmembrane regions (helical) follow at residues 28–48, 98–118, 129–149, 177–197, 205–225, 267–287, 309–329, and 348–368; these read LLWL…GVLV, LLFT…WLII, VGVG…GLLM, LALA…VDIV, ILSW…ICAL, VLSA…PIPV, TVGI…AILL, and FLLP…LAFP.

Belongs to the complex I subunit 1 family. As to quaternary structure, NDH-1 is composed of at least 11 different subunits.

The protein resides in the cellular thylakoid membrane. It carries out the reaction a plastoquinone + NADH + (n+1) H(+)(in) = a plastoquinol + NAD(+) + n H(+)(out). The catalysed reaction is a plastoquinone + NADPH + (n+1) H(+)(in) = a plastoquinol + NADP(+) + n H(+)(out). Its function is as follows. NDH-1 shuttles electrons from an unknown electron donor, via FMN and iron-sulfur (Fe-S) centers, to quinones in the respiratory and/or the photosynthetic chain. The immediate electron acceptor for the enzyme in this species is believed to be plastoquinone. Couples the redox reaction to proton translocation, and thus conserves the redox energy in a proton gradient. This is NAD(P)H-quinone oxidoreductase subunit 1 from Synechococcus sp. (strain CC9605).